Reading from the N-terminus, the 438-residue chain is Xylose isomerase (438 aa).

Active-site residues include H100 and D103. Mg(2+) is bound by residues E231, E267, H270, D295, D306, D308, and D338.

This sequence belongs to the xylose isomerase family. In terms of assembly, homotetramer. Mg(2+) serves as cofactor.

The protein resides in the cytoplasm. The catalysed reaction is alpha-D-xylose = alpha-D-xylulofuranose. The protein is Xylose isomerase of Pseudomonas syringae pv. syringae (strain B728a).